Here is a 559-residue protein sequence, read N- to C-terminus: MARKGNPISVRLDLNRSSDPSRFSDYYYGKSLYQDVNLRSYFSSIRPPTRLTFGFRLGRCIILHFPKRTFIHFFLPRRPLRLKRRDKSRPGKDKGRWWAFGKVGPIGCLHSSEGTEEERNEVRGRGAGKRVESIDREKQNEIRIWPKKMQRYGYHDRTPSRKKNFSKSLRVSGAFKHPKYAGVVNDIAFLIENDDSFIKTKLFKFFFLPKKSRSDGPTSHLLKRTLPAVRPSLNYSVMQYFFNTKNKMHFDPVVVLNHFVAPGVAEPSTMGGAKGGSLDKRIRSRIAFFVESSTSDKKCLARAKKRLIHFIRQANDLRFAGTTKTTISLFPFFGATFFFSRDGVGVYNNPFYEYAREQLLGQLRIKCRNLMGKDKVMELIEKFIDLGRIGKLIKGIEMMIEIILRKRRIPYGYNSYLNEVQKMRSFLSNRTNTNTLIESVKIKSVYQSASLIAQDISFQLRNNPISFRSIFSKIVKDIPLIMPKGVEGIRICCSGRLGGAEIARTECGKYGKTSCNVFNQKIDYAPAEVSTRDGISGVKVRISYSQNKKGRAISETYEI.

Residues 113-134 (EGTEEERNEVRGRGAGKRVESI) are disordered. A compositionally biased stretch (basic and acidic residues) spans 120 to 134 (NEVRGRGAGKRVESI).

Belongs to the universal ribosomal protein uS3 family.

It is found in the mitochondrion. This chain is Small ribosomal subunit protein uS3m (RPS3), found in Zea mays (Maize).